We begin with the raw amino-acid sequence, 672 residues long: PHD finger protein MALE STERILITY 1 (672 aa).

The segment at 614 to 664 adopts a PHD-type zinc-finger fold; it reads RIECECGATEEDGERMVCCDICEVWQHTRCVGVQHNEEVPRIFLCQSCDQH.

In closed flower buds, especially in anthers.

Its subcellular location is the nucleus. In terms of biological role, transcriptional activator required for anther and post-meiotic pollen development and maturation. Seems to regulate inflorescence branching and floral development. May control tapetal development by directly regulating tapetal programmed cell death (PCD) and breakdown. Implicated in pollen cytosolic components and wall development (e.g. exine and intine formation). This chain is PHD finger protein MALE STERILITY 1 (MS1), found in Arabidopsis thaliana (Mouse-ear cress).